The chain runs to 283 residues: Trafficking protein particle complex subunit 31 (283 aa).

Positions 1–16 (MSQRIIQPSASDQQFP) are enriched in polar residues. 2 disordered regions span residues 1–20 (MSQR…GKSD) and 126–156 (SSKL…RLQE). Low complexity predominate over residues 126–151 (SSKLSNASNSPGMLANSSTATSASAN).

Belongs to the TRAPP small subunits family. BET3 subfamily. Part of the multisubunit TRAPP (transport protein particle) I complex composed of BET3, BET5, TRS20, TRS23, TRS31 and TRS33. Part of the multisubunit TRAPP (transport protein particle) II complex composed of BET3, BET5, TRS20, TRS23, TRS31, TRS33, TRS65, TRS85, TRS120 and TRS130. Part of the multisubunit TRAPP (transport protein particle) III complex composed of BET3, BET5, TRS20, TRS23, TRS31, TRS33 and TRS85.

Its subcellular location is the golgi apparatus. It localises to the cis-Golgi network. It is found in the endoplasmic reticulum. The protein localises to the preautophagosomal structure. In terms of biological role, component of the TRAPP I, TRAPP II and TRAPP III complexes which act as guanine nucleotide exchange factors (GEF) for YPT1. TRAPP I plays a key role in the late stages of endoplasmic reticulum to Golgi traffic. TRAPP II plays a role in intra-Golgi transport. TRAPP III plays a role in autophagosome formation. The chain is Trafficking protein particle complex subunit 31 (TRS31) from Saccharomyces cerevisiae (strain ATCC 204508 / S288c) (Baker's yeast).